The chain runs to 141 residues: Large ribosomal subunit protein uL11c (141 aa).

This sequence belongs to the universal ribosomal protein uL11 family. As to quaternary structure, part of the ribosomal stalk of the 50S ribosomal subunit. Interacts with L10 and the large rRNA to form the base of the stalk. L10 forms an elongated spine to which L12 dimers bind in a sequential fashion forming a multimeric L10(L12)X complex.

The protein resides in the plastid. The protein localises to the chloroplast. Its function is as follows. Forms part of the ribosomal stalk which helps the ribosome interact with GTP-bound translation factors. The chain is Large ribosomal subunit protein uL11c from Cyanidium caldarium (Red alga).